Reading from the N-terminus, the 1069-residue chain is Leucine--tRNA ligase (1069 aa).

The tract at residues 19-53 (TAEHGTGAANATASPSGAVPPSGATATAGTGDEPG) is disordered. The short motif at 107–118 (PYPSGTGLHVGH) is the 'HIGH' region element. Positions 823-836 (GRFTHHGAPVDRRS) are enriched in basic and acidic residues. A disordered region spans residues 823–846 (GRFTHHGAPVDRRSGKMGKSLKNS). The 'KMSKS' region motif lies at 838–842 (KMGKS). Lys841 is a binding site for ATP.

This sequence belongs to the class-I aminoacyl-tRNA synthetase family.

The protein localises to the cytoplasm. It carries out the reaction tRNA(Leu) + L-leucine + ATP = L-leucyl-tRNA(Leu) + AMP + diphosphate. The sequence is that of Leucine--tRNA ligase from Frankia alni (strain DSM 45986 / CECT 9034 / ACN14a).